A 196-amino-acid chain; its full sequence is Molybdenum cofactor guanylyltransferase (196 aa).

GTP contacts are provided by residues 10-12, Lys23, Asn51, Asp69, and Asp99; that span reads LAG. Residue Asp99 participates in Mg(2+) binding.

Belongs to the MobA family. In terms of assembly, monomer. Requires Mg(2+) as cofactor.

It is found in the cytoplasm. It carries out the reaction Mo-molybdopterin + GTP + H(+) = Mo-molybdopterin guanine dinucleotide + diphosphate. In terms of biological role, transfers a GMP moiety from GTP to Mo-molybdopterin (Mo-MPT) cofactor (Moco or molybdenum cofactor) to form Mo-molybdopterin guanine dinucleotide (Mo-MGD) cofactor. This chain is Molybdenum cofactor guanylyltransferase, found in Shewanella baltica (strain OS185).